A 296-amino-acid polypeptide reads, in one-letter code: Nucleotide-binding protein ABC3036 (296 aa).

Residue 13-20 (GMSGAGKS) participates in ATP binding. 64–67 (DLRG) provides a ligand contact to GTP.

It belongs to the RapZ-like family.

Its function is as follows. Displays ATPase and GTPase activities. The chain is Nucleotide-binding protein ABC3036 from Shouchella clausii (strain KSM-K16) (Alkalihalobacillus clausii).